The sequence spans 110 residues: PCNA-associated factor (110 aa).

K15 is covalently cross-linked (Glycyl lysine isopeptide (Lys-Gly) (interchain with G-Cter in ubiquitin)). The D-box signature appears at 23–34 (RKVLGSSTFVTN). Position 24 is an N6-acetyllysine; alternate (K24). Residue K24 forms a Glycyl lysine isopeptide (Lys-Gly) (interchain with G-Cter in ubiquitin); alternate linkage. Phosphoserine is present on S28. Low complexity predominate over residues 29-39 (STFVTNSSGSS). The segment at 29–110 (STFVTNSSGS…QPDHRDDENE (82 aa)) is disordered. The short motif at 61–71 (QKGIGEFFRLS) is the PIP-box element. S71 carries the phosphoserine modification. A compositionally biased stretch (basic and acidic residues) spans 71 to 80 (SPKDSKKENQ). Residues 77-79 (KEN) carry the KEN box motif. The Initiation motif signature appears at 84–96 (EAGSSGLGKAKRK).

Interacts (when monoubiquitinated at Lys-15 and Lys-24) with PCNA. Interacts with isoform 2/p33ING1b of ING1. Interacts with BRCA1. Post-translationally, monoubiquitinated at Lys-15 and Lys-24 during normal S phase, promoting its association with PCNA. Also diubiquitinated at these 2 sites. Following DNA damage, monoubiquitin chains at Lys-15 and Lys-24 are probably extended, leading to disrupt the interaction with PCNA. Polyubiquitinated by the APC/C complex at the mitotic exit, leading to its degradation by the proteasome.

It is found in the nucleus. The protein localises to the cytoplasm. The protein resides in the perinuclear region. PCNA-binding protein that acts as a regulator of DNA repair during DNA replication. Following DNA damage, the interaction with PCNA is disrupted, facilitating the interaction between monoubiquitinated PCNA and the translesion DNA synthesis DNA polymerase eta (POLH) at stalled replisomes, facilitating the bypass of replication-fork-blocking lesions. Also acts as a regulator of centrosome number. This Rattus norvegicus (Rat) protein is PCNA-associated factor.